The chain runs to 67 residues: Small ribosomal subunit protein bS21 (67 aa).

The protein belongs to the bacterial ribosomal protein bS21 family.

This is Small ribosomal subunit protein bS21 from Acidiphilium cryptum (strain JF-5).